Here is a 2314-residue protein sequence, read N- to C-terminus: A-kinase anchor protein 6 (2314 aa).

Over residues 1–12 (MLTMSVTLSPLR) the composition is skewed to polar residues. Disordered regions lie at residues 1–25 (MLTM…DASP), 285–432 (PSSC…DPPD), 505–613 (SLCR…PCHA), and 736–755 (TDEK…HSAT). Basic and acidic residues predominate over residues 301 to 311 (SDDHKGEHGED). The segment covering 319–330 (QLDSTVGMSSLD) has biased composition (polar residues). Residues 398–420 (ETQKNERKGSDRKGQVVDLKPEL) show a composition bias toward basic and acidic residues. Residues 569–592 (SKASSSPPCSHSSESSLGSDSIKS) show a composition bias toward low complexity. Residues 736 to 753 (TDEKSERPSSSEKNESHS) are compositionally biased toward basic and acidic residues. 2 Spectrin repeats span residues 768 to 847 (QHQE…QLLE) and 1033 to 1148 (ILEK…LLDD). Position 1072 is a phosphoserine (serine 1072). Residues 1349 to 1401 (CHSGDLSQNSGSESGIVSEGDNEMPTNSDMSLFSMVDGSPSNPETEHPDPQMG) are disordered. A compositionally biased stretch (polar residues) spans 1353–1363 (DLSQNSGSESG). Phosphoserine is present on residues serine 1568 and serine 1593. Composition is skewed to basic and acidic residues over residues 1816–1831 (RSGV…DGGG) and 1874–1891 (GENK…HVAD). 3 disordered regions span residues 1816–1838 (RSGV…ANPS), 1854–1926 (LSEN…KTIS), and 1940–2012 (SEDS…SGAR). Polar residues predominate over residues 1917-1926 (NLASNVKTIS). Positions 1944–1958 (SVARKEFCPPNDRHP) are enriched in basic and acidic residues. The interval 2062-2075 (IIDMASTALKSKSQ) is PKA-RII subunit binding domain. The tract at residues 2166–2286 (EEAGLPGALP…NAKQPKGKVA (121 aa)) is disordered. The span at 2215–2226 (GADDAKEGDDVS) shows a compositional bias: basic and acidic residues. The segment covering 2227 to 2243 (HTSQGCAESTEPTTPSG) has biased composition (polar residues).

As to quaternary structure, interacts with RII subunit of PKA, phosphatase 2B (calcineurin) and AKAP79. Interacts with SYNPO2.

It localises to the sarcoplasmic reticulum. It is found in the nucleus membrane. Functionally, binds to type II regulatory subunits of protein kinase A and anchors/targets them to the nuclear membrane or sarcoplasmic reticulum. May act as an adapter for assembling multiprotein complexes. In Rattus norvegicus (Rat), this protein is A-kinase anchor protein 6 (Akap6).